The sequence spans 201 residues: MPPPEDPEDYVAPAAQRVRAGTLLLANTDLLEPTFRRSVIYIVEHNDGGTLGVVLNRPSDTAVYNVLPQWTTLAAKPKTMFIGGPVKRDAALCLATLRVGADPQGAPGLRHVDGRVVMVDLDADPDAIAPLVEGVRIFAGYSGWTIGQLEGEIERDDWIVLSALPSDVLVGPRSDLWGQVLRRQPLPLSLLATHPIDISRN.

The protein belongs to the UPF0301 (AlgH) family.

The chain is UPF0301 protein MAP_0045 from Mycolicibacterium paratuberculosis (strain ATCC BAA-968 / K-10) (Mycobacterium paratuberculosis).